The following is a 121-amino-acid chain: Small ribosomal subunit protein eS24 (121 aa).

This sequence belongs to the eukaryotic ribosomal protein eS24 family.

The chain is Small ribosomal subunit protein eS24 from Pyrobaculum aerophilum (strain ATCC 51768 / DSM 7523 / JCM 9630 / CIP 104966 / NBRC 100827 / IM2).